Consider the following 198-residue polypeptide: Peptidyl-tRNA hydrolase (198 aa).

A tRNA-binding site is contributed by Tyr16. His21 acts as the Proton acceptor in catalysis. The tRNA site is built by Phe67, Asn69, and Asn115.

It belongs to the PTH family. Monomer.

It is found in the cytoplasm. The catalysed reaction is an N-acyl-L-alpha-aminoacyl-tRNA + H2O = an N-acyl-L-amino acid + a tRNA + H(+). Its function is as follows. Hydrolyzes ribosome-free peptidyl-tRNAs (with 1 or more amino acids incorporated), which drop off the ribosome during protein synthesis, or as a result of ribosome stalling. In terms of biological role, catalyzes the release of premature peptidyl moieties from peptidyl-tRNA molecules trapped in stalled 50S ribosomal subunits, and thus maintains levels of free tRNAs and 50S ribosomes. This is Peptidyl-tRNA hydrolase from Prochlorococcus marinus (strain MIT 9301).